The sequence spans 311 residues: Porphobilinogen deaminase (311 aa).

S-(dipyrrolylmethanemethyl)cysteine is present on C241.

Belongs to the HMBS family. Monomer. The cofactor is dipyrromethane.

It catalyses the reaction 4 porphobilinogen + H2O = hydroxymethylbilane + 4 NH4(+). The protein operates within porphyrin-containing compound metabolism; protoporphyrin-IX biosynthesis; coproporphyrinogen-III from 5-aminolevulinate: step 2/4. Its function is as follows. Tetrapolymerization of the monopyrrole PBG into the hydroxymethylbilane pre-uroporphyrinogen in several discrete steps. The polypeptide is Porphobilinogen deaminase (hemC) (Halalkalibacterium halodurans (strain ATCC BAA-125 / DSM 18197 / FERM 7344 / JCM 9153 / C-125) (Bacillus halodurans)).